The sequence spans 1008 residues: PWWP domain-containing protein 3 (1008 aa).

The stretch at 78 to 122 (VSSLLKLKEDVEEEEEEEEEEEEEEEDGEDEEEEEEEEEEEEEEE) forms a coiled coil. A disordered region spans residues 84 to 124 (LKEDVEEEEEEEEEEEEEEEDGEDEEEEEEEEEEEEEEEHG). Residues 87–122 (DVEEEEEEEEEEEEEEEDGEDEEEEEEEEEEEEEEE) show a composition bias toward acidic residues. In terms of domain architecture, PWWP spans 127 to 188 (VGDFVWGKIK…ASQLKPFAES (62 aa)). 3 disordered regions span residues 307-339 (EYHE…GLQW), 399-606 (ETEP…LGQE), and 668-874 (NHKF…GPGS). Over residues 321 to 330 (NNDDDDDDEE) the composition is skewed to acidic residues. Positions 399 to 409 (ETEPADGDVKS) are enriched in basic and acidic residues. Positions 473–490 (DDGDDDGSGDKEESEEKE) are enriched in acidic residues. Composition is skewed to basic and acidic residues over residues 511-522 (RFDDSVVERSTE), 677-687 (SSDKEKEELSE), and 707-725 (QKAE…TDKH). Positions 726 to 738 (GKMKKERKRKKSE) are enriched in basic residues. 3 stretches are compositionally biased toward basic and acidic residues: residues 739–758 (SKKE…ESTK), 768–787 (SKKQ…ESTK), and 794–818 (NPES…ESTK). Short sequence motifs (nuclear localization signal) lie at residues 786–793 (TKKERKRK), 809–816 (TRKESVES), and 841–848 (EKKKKKKR). Positions 804–824 (VEEEETRKESVESTKKERKRK) form a coiled coil. A compositionally biased stretch (basic residues) spans 842–854 (KKKKKKREGKSKK).

This sequence belongs to the PDP family. As to quaternary structure, interacts with DEK3. Binds to LHP1, MSI4/FVE and MSI5. Component of the PRC2 (polycomb repressive complex 2) complex which regulates histone methylation on histone H3K27.

It localises to the nucleus. Functionally, together with PDP1, PDP2 and PDP6, interacts with MSI4/FVE and MSI5 to suppress FLC, MAF4 and MAF5 expression by regulating the function of the PRC2 complex and modulating H3K27me3 level, thereby promoting flowering. This is PWWP domain-containing protein 3 from Arabidopsis thaliana (Mouse-ear cress).